Reading from the N-terminus, the 423-residue chain is Maltooligosaccharide ABC transporter solute-binding lipoprotein (423 aa).

The N-terminal stretch at 1–24 is a signal peptide; that stretch reads MSSKFMKSTAVLGTVTLASLLLVA. The N-palmitoyl cysteine moiety is linked to residue Cys-25. Cys-25 carries S-diacylglycerol cysteine lipidation. Substrate is bound by residues Tyr-52, Asp-77, Asp-83, 103 to 104, Glu-148, Asp-193, Asn-196, 251 to 254, Trp-274, and Lys-307; these read DR and EGAG.

The protein belongs to the bacterial solute-binding protein 1 family.

It is found in the cell membrane. Part of an ABC transporter complex involved in the uptake of maltodextrins. Binds glycogen-derived linear maltooligosaccharides increasing in size from maltotriose to maltooctaose with the highest affinity for maltotriose. Has a very weak affinity for maltose. Has also a very low affinity for maltotetraitol, indicating that the binding is selective for maltooligosaccharides with an intact reducing end. This chain is Maltooligosaccharide ABC transporter solute-binding lipoprotein (malX), found in Streptococcus pneumoniae (strain ATCC BAA-255 / R6).